The chain runs to 212 residues: 7-carboxy-7-deazaguanine synthase (212 aa).

Residues 22 to 24 and arginine 37 contribute to the substrate site; that span reads LQG. Positions 28–212 constitute a Radical SAM core domain; that stretch reads NTGMPAVFVR…VQTHKWAGIE (185 aa). Cysteine 41, cysteine 45, and cysteine 48 together coordinate [4Fe-4S] cluster. Threonine 50 contributes to the Mg(2+) binding site. Threonine 78 lines the substrate pocket. S-adenosyl-L-methionine is bound by residues glycine 80 and 122 to 124; that span reads SPK.

Belongs to the radical SAM superfamily. 7-carboxy-7-deazaguanine synthase family. In terms of assembly, homodimer. [4Fe-4S] cluster serves as cofactor. S-adenosyl-L-methionine is required as a cofactor. Requires Mg(2+) as cofactor.

It carries out the reaction 6-carboxy-5,6,7,8-tetrahydropterin + H(+) = 7-carboxy-7-deazaguanine + NH4(+). It participates in purine metabolism; 7-cyano-7-deazaguanine biosynthesis. In terms of biological role, catalyzes the complex heterocyclic radical-mediated conversion of 6-carboxy-5,6,7,8-tetrahydropterin (CPH4) to 7-carboxy-7-deazaguanine (CDG), a step common to the biosynthetic pathways of all 7-deazapurine-containing compounds. The chain is 7-carboxy-7-deazaguanine synthase from Neisseria meningitidis serogroup B (strain ATCC BAA-335 / MC58).